A 697-amino-acid polypeptide reads, in one-letter code: Probable translocation protein y4yR (697 aa).

8 consecutive transmembrane segments (helical) span residues 20 to 40, 42 to 62, 67 to 87, 107 to 127, 200 to 220, 235 to 255, 293 to 313, and 372 to 392; these read VALMLLLAVSMMVMPIPVMAV, ALIGFNMGLAVLLLMAALYVS, FSSLPGVILLSTVFRLALTVA, SFVISGNIVVGFVIFLVVTMV, SIAGLVVICINMLGGISIGLL, LLTIGDALISQIPALLLSITA, VAMGFVPGFPLPVFFMLAAVF, and IARISQLVSADLGIIVPPIPV. The segment at 675 to 697 is disordered; the sequence is IRLPPSNGTSGEPRSIRPSATTG. The span at 680–697 shows a compositional bias: polar residues; sequence SNGTSGEPRSIRPSATTG.

Belongs to the FHIPEP (flagella/HR/invasion proteins export pore) family.

It localises to the cell inner membrane. In terms of biological role, could be involved in the secretion of an unknown factor. The polypeptide is Probable translocation protein y4yR (Sinorhizobium fredii (strain NBRC 101917 / NGR234)).